The following is a 364-amino-acid chain: MIRAFDQLSLPLLRWLDAEDAHRLAIQGLKLLPAIKPRPDDAKLAVRAFGLNFPNPVGMAAGFDKNAEVPDALLRLGFGFVEIGSVTPRPQSGNPRPRLFRLERDEAVVNRMGFNNDGAEIVLRRLAGRANQGGIVGVNVGANKDSADRVADYVRLIETFAPVASYFTVNISSPNTPGLRNLQQAAQLNELLSKVLEARDRVRRKAGDTPVLLKIAPDLSLAELDDVVHVARSRGVDGMIVSNTTLARPNSLREQLRAKEQGGLSGRPLFRLSTRMVAETFVRVEGAFPLIGVGGIDSGGAALTKIRAGASLIQLYSSLVYKGLGLVESIKADLTSTLLRTGRDSLSEIVGADAATITAEDWPV.

FMN-binding positions include 61–65 and Ser85; that span reads AGFDK. Lys65 is a binding site for substrate. 110–114 contributes to the substrate binding site; it reads NRMGF. 2 residues coordinate FMN: Asn139 and Asn170. Asn170 serves as a coordination point for substrate. The active-site Nucleophile is Ser173. Asn175 serves as a coordination point for substrate. Residues Lys214 and Ser242 each coordinate FMN. 243-244 lines the substrate pocket; the sequence is NT. FMN contacts are provided by residues Gly266, Gly295, and 316–317; that span reads YS.

It belongs to the dihydroorotate dehydrogenase family. Type 2 subfamily. As to quaternary structure, monomer. Requires FMN as cofactor.

The protein resides in the cell membrane. The catalysed reaction is (S)-dihydroorotate + a quinone = orotate + a quinol. The protein operates within pyrimidine metabolism; UMP biosynthesis via de novo pathway; orotate from (S)-dihydroorotate (quinone route): step 1/1. Its function is as follows. Catalyzes the conversion of dihydroorotate to orotate with quinone as electron acceptor. This Bradyrhizobium sp. (strain BTAi1 / ATCC BAA-1182) protein is Dihydroorotate dehydrogenase (quinone).